We begin with the raw amino-acid sequence, 658 residues long: MGGHLSPWPTYTSGQTILQNRKPCSDDYRKRVGSCQQHPFRTAKPQYLEELENYLRKELLLLDLGTDSTQELRLQPYREIFEFFIEDFKTYKPLLSSIKNAYEGMLAHQREKIRALEPLKAKLVTVNEDCNERILAMRAEEKYEISLLKKEKMNLLKLIDKKNEEKISLQSEVTKLRKNLAEEYLHYLSERDACKILIADLNELRYQREDMSLAQSPGIWGEDPVKLTLALKMTRQDLTRTQMELNNMKANFGDVVPRRDFEMQEKTNKDLQEQLDTLRASYEEVRKEHEILMQLHMSTLKERDQFFSELQEIQRTSTPRPDWTKCKDVVAGGPERWQMLAEGKNSDQLVDVLLEEIGSGLLREKDFFPGLGYGEAIPAFLRFDGLVENKKPSKKDVVNLLKDAWKERLAEEQKETFPDFFFNFLEHRFGPSDAMAWAYTIFENIKIFHSNEVMSQFYAVLMGKRSENVYVTQKETVAQLLKEMTNADSQNEGLLTMEQFNTVLKSTFPLKTEEQIQELMEAGGWHPSSSNADLLNYRSLFMEDEEGQSEPFVQKLWEQYMDEKDEYLQQLKQELGIELHEEVTLPKLRGGLMTIDPSLDKQTVNTYMSQAFQLPESEMPEEGDEKEEAVVEILQTALERLQVIDIRRVGPREPEPAS.

Coiled-coil stretches lie at residues 144-184 (EISL…AEEY) and 230-295 (ALKM…LMQL).

In terms of assembly, interacts with TSNAX.

The protein localises to the cytoplasm. It is found in the perinuclear region. Possible role in spermatogenesis. The sequence is that of Translin-associated factor X-interacting protein 1 from Homo sapiens (Human).